The sequence spans 144 residues: Protein WAP-3 (144 aa).

Positions 1–21 are cleaved as a signal peptide; it reads MRSRSFLVLVAVFLICETLVA. The segment at 28–49 is disordered; that stretch reads RGPKGQGQDPVEGQDQDEGQGP. A region of interest (8 X 6 AA approximate tandem repeats) is located at residue Gly-34. 8 tandem repeats follow at residues 34–39, 40–45, 46–51, 58–63, 64–69, 70–75, 76–81, and 82–87. The tract at residues 64 to 85 is disordered; that stretch reads GQDPVEGQDPVKAQLPDKVQDP. The region spanning 97–144 is the WAP domain; sequence LFPKPGVCPKIIFCPLVNPPIKCWRDSHCPGVKKCCPSLCGKGCVTPR. Intrachain disulfides connect Cys-104–Cys-132, Cys-110–Cys-136, Cys-119–Cys-131, and Cys-125–Cys-140.

As to expression, large intestine (relatively low levels).

In Sus scrofa (Pig), this protein is Protein WAP-3.